The sequence spans 1157 residues: MKAGHLLWALLLMHSLCSLPTDGAIRNYYLGIQDIQWNYAPKGRNVITNQTLNNDTVASSFLKSGKNRIGGTYKKTVYKEYSDGTYTNEIAKPAWLGFLGPLLKAEMGDVILIHLKNFASRPYTIHPHGVFYEKDSEGSLYPDGSSGYLKADDSVPPGGSHVYNWSIPEGHAPTEADPACLTWIYHSHVDAPRDIATGLIGPLITCKRGTLDGNSPPQRKDVDHNFFLLFSVIDENLSWHLDDNIATYCSDPASVDKEDGPFQDSNRMHAINGFVFGNLPELSMCAQKHVAWHLFGMGNEIDVHTAFFHGQTLSIRGHRTDVAHIFPATFVTAEMVPQKSGTWLISCVVNSHLKSGMQAFYKVDSCSMDPPVEQLTGKVRQYFIQAHEIQWDYGPIGHDGRTGKSLREPGSGPDKYFQKSSSRIGGTYWKVRYEAFQDETFQERLHQEEETHLGILGPVIRAEVGDTIQVVFYNRASQPFSIQPHGVFYEKSSEGTVYNDGTSYPKVAKSFEKVTYYWTVPPHAGPTAEDPACLTWMYFSAADPTRDTNSGLVGPLLVCKAGALGEDGKQKGVDKEFFLLFTIFDENESWYNNANQAAGMLDSRLLSEDVEGFEDSNRMHAINGFLFSNLPRLDICKGDTVAWHLLGLGTENDVHGVMFEGNTLQLQGMRKSAAMLFPHTFVTAIMQPDNPGIFEIYCQAGSHREAGMQAIYNVSQCSSHQDSPRQHYQASRVYYIMAEEIEWDYCPDRSWELEWYNTSEKDSYGHVFLSNKDGLLGSKYKKAVFREYTDGTFRIPQPRSGPEEHLGILGPLIRGEVGDILTVVFKNKASRPYSIHAHGVLESSTGWPQAAEPGEVLTYQWNIPERSGPGPSDSACVSWIYYSAVDPIKDMYSGLVGPLVICRNGILEPNGGRNDMDREFALLFLIFDENQSWYLKENIATYGPQETSHVNLQDATFLESNKMHAINGKLYANLRGLTVYQGERVAWYMLAMGQDTDIHTVHFHAESFLYQNGHSYRADVVDLFPGTFEVVEMVASNPGAWLMHCHVTDHVHAGMETIFTVLSHEEHFSTMTTITKEIGKAVILQNIGEGNVKMLGMNIPVKNVEILSSALIAICVVLLLIALALGGVVWYQHRQRKLRRNRRSILDDSFKLLSLKQ.

The first 23 residues, 1–23, serve as a signal peptide directing secretion; that stretch reads MKAGHLLWALLLMHSLCSLPTDG. Plastocyanin-like domains are found at residues 24-206, 218-366, 370-559, 569-717, 730-902, and 910-1066; these read AIRN…LITC, QRKD…VDSC, PPVE…LLVC, KQKG…VSQC, ASRV…LVIC, and NGGR…SHEE. Residues 24-1109 are Extracellular-facing; it reads AIRNYYLGIQ…PVKNVEILSS (1086 aa). Residues asparagine 49 and asparagine 54 are each glycosylated (N-linked (GlcNAc...) asparagine). 2 residues coordinate Na(+): glycine 70 and tyrosine 73. Positions 126 and 128 each coordinate Cu(2+). Residue histidine 126 participates in O2 binding. Lysine 134, aspartate 152, and aspartate 153 together coordinate Ca(2+). The N-linked (GlcNAc...) asparagine glycan is linked to asparagine 164. Cysteine 180 and cysteine 206 form a disulfide bridge. Positions 186 and 188 each coordinate Cu(2+). Residue histidine 186 participates in O2 binding. A glycan (N-linked (GlcNAc...) asparagine) is linked at asparagine 236. Serine 265 provides a ligand contact to Na(+). The cysteines at positions 285 and 366 are disulfide-linked. Residues histidine 304, cysteine 347, and histidine 352 each contribute to the Cu(2+) site. Residues tyrosine 416, glycine 425, and tyrosine 428 each contribute to the Na(+) site. A disulfide bond links cysteine 533 and cysteine 559. Asparagine 587 carries an N-linked (GlcNAc...) asparagine glycan. Position 616 (serine 616) interacts with Na(+). Cysteine 636 and cysteine 717 are joined by a disulfide. Cu(2+) contacts are provided by histidine 655, cysteine 698, histidine 703, and methionine 708. N-linked (GlcNAc...) asparagine glycans are attached at residues asparagine 713 and asparagine 757. Residues phenylalanine 768 and glycine 777 each contribute to the Na(+) site. Residues cysteine 876 and cysteine 902 are joined by a disulfide bond. Residue asparagine 930 is glycosylated (N-linked (GlcNAc...) asparagine). Residues histidine 999, histidine 1002, histidine 1004, histidine 1044, cysteine 1045, histidine 1046, histidine 1050, and methionine 1055 each coordinate Cu(2+). O2 is bound by residues histidine 1002 and histidine 1004. O2 is bound at residue histidine 1046. Residues 1110–1130 traverse the membrane as a helical segment; it reads ALIAICVVLLLIALALGGVVW. Topologically, residues 1131–1157 are cytoplasmic; that stretch reads YQHRQRKLRRNRRSILDDSFKLLSLKQ. Serine 1144, serine 1149, and serine 1154 each carry phosphoserine.

The protein belongs to the multicopper oxidase family. Part of a complex composed of SLC40A1/ferroportin, TF/transferrin and HEPH/hephaestin that transfers iron from cells to transferrin. Cu cation is required as a cofactor. Highly expressed in small intestine and colon.

The protein resides in the basolateral cell membrane. It catalyses the reaction 4 Fe(2+) + O2 + 4 H(+) = 4 Fe(3+) + 2 H2O. In terms of biological role, plasma membrane ferroxidase that mediates the extracellular conversion of ferrous/Fe(2+) iron into its ferric/Fe(3+) form. Couples ferroportin which specifically exports ferrous/Fe(2+) iron from cells to transferrin that only binds and shuttles extracellular ferric/Fe(3+) iron throughout the body. By helping iron transfer from cells to blood mainly contributes to dietary iron absorption by the intestinal epithelium and more generally regulates iron levels in the body. This is Hephaestin from Rattus norvegicus (Rat).